We begin with the raw amino-acid sequence, 514 residues long: MSFRINTNIAALTSHAVGVQNNRDLSSSLEKLSSGLRINKAADDSSGMAIADSLRSQSANLGQAIRNANDAIGMVQTADKAMDEQIKILDTIKTKAVQAAQDGQTLESRRALQSDIQRLLEELDNIANTTSFNGQQMLSGSFSNKEFQIGAYSNATVKASIGSTSSDKIGHVRMETSSFSGAGMLASAAAQNLTEVGLNFKQVNGVNDYKIETVRISTSAGTGIGALSEIINRFSNTLGVRASYNVMATGGTPVQSGTVRELTINGVEIGTVNDVHKNDADGRLTNAINSVKDRTGVEASLDIQGRINLHSIDGRAISVHAASASGQVFGGGNFAGISGTQHAVIGRLTLTRTDARDIIVSGVNFSHVGFHSAQGVAEYTVNLRAVRGIFDANVASAAGANANGAQAETNSQGIGAGVTSLKGAMIVMDMADSARTQLDKIRSDMGSVQMELVTTINNISVTQVNVKAAESQIRDVDFAEESANFSKYNILAQSGSFAMAQANAVQQNVLRLLQ.

Belongs to the bacterial flagellin family. Heteromer of FlaA and FlaB. FlaB is located proximal to the hook while the remainder of the filament is composed of the predominant FlaA.

It is found in the secreted. The protein resides in the bacterial flagellum. In terms of biological role, flagellin is the subunit protein which polymerizes to form the filaments of bacterial flagella. Important for motility and virulence. In Helicobacter pylori (strain ATCC 700392 / 26695) (Campylobacter pylori), this protein is Flagellin B (flaB).